Consider the following 105-residue polypeptide: MATLQQQKIRIRLKAFDRRLLDTSCDRIVETANRTNATAIGPIPLPTRRRIYCVLRSPHVDKDSREHFETRTHRRIIDIYQPSSKTIDALMKLDLPAGVDIEVKL.

The protein belongs to the universal ribosomal protein uS10 family. Part of the 30S ribosomal subunit.

Functionally, involved in the binding of tRNA to the ribosomes. The protein is Small ribosomal subunit protein uS10 of Synechococcus elongatus (strain ATCC 33912 / PCC 7942 / FACHB-805) (Anacystis nidulans R2).